The sequence spans 747 residues: Phenylalanine ammonia-lyase 2 (747 aa).

The segment covering 1 to 20 (MTILSGTTAAPRVNGTTMNG) has biased composition (polar residues). The disordered stretch occupies residues 1-47 (MTILSGTTAAPRVNGTTMNGHSKPHTNGVHLNGHAPKATTESPWPQS). The active-site Proton donor/acceptor is Y124. Residues 229 to 231 (ASG) constitute a cross-link (5-imidazolinone (Ala-Gly)). 2,3-didehydroalanine (Ser) is present on S230. Residues N290, Q380, R386, N416, K487, E515, and N518 each contribute to the (E)-cinnamate site.

Belongs to the PAL/histidase family. In terms of assembly, homotetramer. Post-translationally, contains an active site 4-methylidene-imidazol-5-one (MIO), which is formed autocatalytically by cyclization and dehydration of residues Ala-Ser-Gly.

It is found in the cytoplasm. The catalysed reaction is L-phenylalanine = (E)-cinnamate + NH4(+). The protein operates within phenylpropanoid metabolism; trans-cinnamate biosynthesis; trans-cinnamate from L-phenylalanine: step 1/1. Its function is as follows. Catalyzes the non-oxidative deamination of L-phenylalanine to form trans-cinnamic acid and a free ammonium ion. Facilitates the commitment step in phenylpropanoid pathways that produce secondary metabolites such as lignins, coumarins and flavonoids. In Pleurotus ostreatus (Oyster mushroom), this protein is Phenylalanine ammonia-lyase 2.